Reading from the N-terminus, the 401-residue chain is Histone acetyltransferase type B subunit 2 (401 aa).

WD repeat units lie at residues 116-147, 158-189, 206-237, 249-280, and 293-324; these read EHEEEITRARYMPQDPNIVATINGQGTVFLYS, FHKDNGYALSFSTLVKGRLLSGSDDHTVALWE, LHSDIINDNKWHNFNKDLFGTVSEDSLLKIND, KCPQPFNTLAFSHHSSNLLAAAGMDSYVYLYD, and GHEDAVNNLEFSTHVDGVVVSSGSDNRLMMWD. Residues 335–339 form an interaction with the histone H4 N-terminus region; it reads DDAED. A WD 6 repeat occupies 350–381; sequence GHRSSVNDFDLNPQIPWLVASAEEENILQVWK.

It belongs to the WD repeat RBAP46/RBAP48/MSI1 family. Component of the HAT-B complex composed of at least HAT1 and HAT2. In the cytoplasm, this complex binds to the histone H4 tail. In the nucleus, the HAT-B complex has an additional component, the histone H3/H4 chaperone HIF1.

It localises to the cytoplasm. It is found in the nucleus. Functionally, regulatory subunit of the histone acetylase B (HAT-B) complex. The complex acetylates 'Lys-12' of histone H4 which is required for telomeric silencing. HAT2 is required for high affinity binding of the acetyltransferase to histone H4, for the nuclear location of HAT1 and for the HAT1-HIF1 interaction. Alone, it is unable to bind to H4, requiring HAT1 for high affinity interaction with the histone tail. HAT2 also has a HAT1 independent function in life-span regulation. The sequence is that of Histone acetyltransferase type B subunit 2 (HAT2) from Saccharomyces cerevisiae (strain ATCC 204508 / S288c) (Baker's yeast).